The following is a 137-amino-acid chain: Large ribosomal subunit protein mL61 (137 aa).

It belongs to the mitochondrion-specific ribosomal protein mL61 family. As to quaternary structure, component of the mitochondrial large ribosomal subunit (mt-LSU). Mature yeast 74S mitochondrial ribosomes consist of a small (37S) and a large (54S) subunit. The 37S small subunit contains a 15S ribosomal RNA (15S mt-rRNA) and 34 different proteins. The 54S large subunit contains a 21S rRNA (21S mt-rRNA) and 46 different proteins.

It localises to the mitochondrion. In terms of biological role, component of the mitochondrial ribosome (mitoribosome), a dedicated translation machinery responsible for the synthesis of mitochondrial genome-encoded proteins, including at least some of the essential transmembrane subunits of the mitochondrial respiratory chain. The mitoribosomes are attached to the mitochondrial inner membrane and translation products are cotranslationally integrated into the membrane. mL61 is not essential in cells grown at 30 degrees Celsius but is required for mitochondrial translation in cells grown at 18 degrees Celsius. The polypeptide is Large ribosomal subunit protein mL61 (MRP49) (Saccharomyces cerevisiae (strain ATCC 204508 / S288c) (Baker's yeast)).